A 119-amino-acid chain; its full sequence is Large ribosomal subunit protein uL22 (119 aa).

This sequence belongs to the universal ribosomal protein uL22 family. In terms of assembly, part of the 50S ribosomal subunit.

Functionally, this protein binds specifically to 23S rRNA; its binding is stimulated by other ribosomal proteins, e.g. L4, L17, and L20. It is important during the early stages of 50S assembly. It makes multiple contacts with different domains of the 23S rRNA in the assembled 50S subunit and ribosome. The globular domain of the protein is located near the polypeptide exit tunnel on the outside of the subunit, while an extended beta-hairpin is found that lines the wall of the exit tunnel in the center of the 70S ribosome. The chain is Large ribosomal subunit protein uL22 from Rickettsia bellii (strain OSU 85-389).